The following is a 1194-amino-acid chain: UPF0507 protein PICST_55861 (1194 aa).

A VPS9 domain is found at 324–475; that stretch reads QSYDPEAVKF…LSSSLSDELS (152 aa).

Belongs to the UPF0507 family.

The sequence is that of UPF0507 protein PICST_55861 from Scheffersomyces stipitis (strain ATCC 58785 / CBS 6054 / NBRC 10063 / NRRL Y-11545) (Yeast).